The chain runs to 466 residues: ATP synthase subunit beta (466 aa).

155 to 162 (GGAGVGKT) is an ATP binding site.

Belongs to the ATPase alpha/beta chains family. As to quaternary structure, F-type ATPases have 2 components, CF(1) - the catalytic core - and CF(0) - the membrane proton channel. CF(1) has five subunits: alpha(3), beta(3), gamma(1), delta(1), epsilon(1). CF(0) has three main subunits: a(1), b(2) and c(9-12). The alpha and beta chains form an alternating ring which encloses part of the gamma chain. CF(1) is attached to CF(0) by a central stalk formed by the gamma and epsilon chains, while a peripheral stalk is formed by the delta and b chains.

The protein resides in the cell inner membrane. The catalysed reaction is ATP + H2O + 4 H(+)(in) = ADP + phosphate + 5 H(+)(out). Functionally, produces ATP from ADP in the presence of a proton gradient across the membrane. The catalytic sites are hosted primarily by the beta subunits. This Azoarcus sp. (strain BH72) protein is ATP synthase subunit beta.